Here is a 372-residue protein sequence, read N- to C-terminus: Ciliary neurotrophic factor receptor subunit alpha (372 aa).

An N-terminal signal peptide occupies residues 1–22; the sequence is MAAPVPWACCAVLAAAAAVVYA. Positions 27 to 104 constitute an Ig-like C2-type domain; the sequence is PQEAPHVQYE…WHLRHQVLLH (78 aa). The cysteines at positions 46 and 89 are disulfide-linked. N-linked (GlcNAc...) asparagine glycosylation is found at Asn-60, Asn-70, Asn-142, and Asn-190. 2 consecutive Fibronectin type-III domains span residues 108–205 and 206–306; these read PPRE…VKPD and PPEN…TEEP. A WSXWS motif motif is present at residues 290 to 294; the sequence is WSDWS. The disordered stretch occupies residues 301–340; it reads PWTEEPRHLTTEAQAPETTTSTTSSLAPPPTTKICDPGEL. Low complexity predominate over residues 311-326; sequence TEAQAPETTTSTTSSL. Ser-342 carries the GPI-anchor amidated serine lipid modification. Residues 343 to 372 constitute a propeptide, removed in mature form; it reads GGGPSAPFLIHVPVTLALAAAAATANSLLI.

This sequence belongs to the type I cytokine receptor family. Type 3 subfamily. Forms a heterotrimer with LIFR and IL6ST. Interacts with heterodimeric neurotropic cytokine composed of CLCF1/CLC and CRLF1/CLF-1. Either alone or in complex with the heterodimer CLCF1-CRLF1 interacts with SORL1; this interaction may promote internalization and lysosomal degradation. As to expression, expressed in retina, brain, spleen, lung, liver and kidney. In the retina it is highly expressed by photoreceptors, but also found in the RPE, inner nuclear layer and ganglion cells.

The protein resides in the cell membrane. In terms of biological role, binds to CNTF. The alpha subunit provides the receptor specificity. This Canis lupus familiaris (Dog) protein is Ciliary neurotrophic factor receptor subunit alpha (CNTFR).